The following is an 83-amino-acid chain: RNA-binding protein Hfq (83 aa).

One can recognise a Sm domain in the interval 10 to 70 (DTFLNQVRKE…ISTVMPLRPI (61 aa)).

It belongs to the Hfq family. In terms of assembly, homohexamer.

Functionally, RNA chaperone that binds small regulatory RNA (sRNAs) and mRNAs to facilitate mRNA translational regulation in response to envelope stress, environmental stress and changes in metabolite concentrations. Also binds with high specificity to tRNAs. The chain is RNA-binding protein Hfq from Desulfitobacterium hafniense (strain Y51).